The sequence spans 441 residues: tRNA modification GTPase MnmE (441 aa).

Residues arginine 21, glutamate 79, and lysine 118 each contribute to the (6S)-5-formyl-5,6,7,8-tetrahydrofolate site. The 157-residue stretch at 214-370 (GFKIAIVGKP…LEGYLKTQDT (157 aa)) folds into the TrmE-type G domain. Residues 224–229 (NVGKSS), 243–249 (SDEAGTT), and 268–271 (DTAG) each bind GTP. Mg(2+) is bound by residues serine 228 and threonine 249. A (6S)-5-formyl-5,6,7,8-tetrahydrofolate-binding site is contributed by lysine 441.

The protein belongs to the TRAFAC class TrmE-Era-EngA-EngB-Septin-like GTPase superfamily. TrmE GTPase family. As to quaternary structure, homodimer. Heterotetramer of two MnmE and two MnmG subunits. K(+) serves as cofactor.

It localises to the cytoplasm. Its function is as follows. Exhibits a very high intrinsic GTPase hydrolysis rate. Involved in the addition of a carboxymethylaminomethyl (cmnm) group at the wobble position (U34) of certain tRNAs, forming tRNA-cmnm(5)s(2)U34. In Campylobacter concisus (strain 13826), this protein is tRNA modification GTPase MnmE.